Consider the following 358-residue polypeptide: Presenilin hop-1 (358 aa).

Topologically, residues 1–12 (MPRTKRVYSGKT) are cytoplasmic. A helical transmembrane segment spans residues 13–33 (ITGVLYPVAICMLFVAINVKL). At 34–57 (SQPEQQEQSKVVYGLFHSYDTADS) the chain is on the lumenal side. Residues 58 to 78 (GTITLYLIGFLILTTSLGVFC) form a helical membrane-spanning segment. The Cytoplasmic portion of the chain corresponds to 79–86 (YQMKFYKA). A helical membrane pass occupies residues 87–107 (IKVYVLANSIGILLVYSVFHF). The Lumenal segment spans residues 108 to 115 (QRIAEAQS). Residues 116–136 (IPVSVPTFFFLILQFGGLGIT) traverse the membrane as a helical segment. Residues 137–148 (CLHWKSHRRLHQ) lie on the Cytoplasmic side of the membrane. Residues 149–169 (FYLIMLAGLTAIFILNILPDW) form a helical membrane-spanning segment. Residue Thr170 is a topological domain, lumenal. The helical transmembrane segment at 171 to 191 (VWMALTAISFWDIVAVLTPCG) threads the bilayer. Asp182 is a catalytic residue. Residues 192–273 (PLKMLVETAN…EVREVEGTIR (82 aa)) lie on the Cytoplasmic side of the membrane. Positions 221 to 240 (EVDSPDTTRSNSTPLTEFNN) are enriched in polar residues. Residues 221-242 (EVDSPDTTRSNSTPLTEFNNSS) form a disordered region. A helical membrane pass occupies residues 274-294 (LGMGDFVFYSLMLGNTVQTCP). Residue Asp278 is part of the active site. Residues 295 to 297 (LPT) lie on the Lumenal side of the membrane. The helical transmembrane segment at 298–318 (VVACFVSNLVGLTITLPIVTL) threads the bilayer. Residues 319 to 321 (SQT) are Cytoplasmic-facing. Positions 322-342 (ALPALPFPLAIAAIFYFSSHI) form an intramembrane region, helical. A PAL motif is present at residues 324 to 326 (PAL). At 343–358 (ALTPFTDLCTSQLILI) the chain is on the cytoplasmic side.

It belongs to the peptidase A22A family. As to quaternary structure, homodimer. Component of the gamma-secretase complex, a complex probably composed of the presenilin homodimer (sel-12, hop-1 or spe-4), nicastrin (aph-2), aph-1 and pen-2. Weakly expressed.

Its subcellular location is the endoplasmic reticulum membrane. It localises to the golgi apparatus membrane. Its function is as follows. Probable catalytic subunit of the gamma-secretase complex, an endoprotease complex that catalyzes the intramembrane cleavage of integral membrane proteins such as Notch receptors (lin-12 or glp-1). Probably works redundantly of lin-12, which provides more presenilin function. In Caenorhabditis elegans, this protein is Presenilin hop-1 (hop-1).